The sequence spans 577 residues: Endopolyphosphatase (577 aa).

At 1–2 the chain is on the cytoplasmic side; that stretch reads MR. The chain crosses the membrane as a helical; Signal-anchor for type II membrane protein span at residues 3–23; the sequence is PSVITVAVLFVQSTWASFAFG. At 24–577 the chain is on the vacuolar side; sequence NPMSMRNKAH…YIGSISDFED (554 aa). Residues Asn-363, Asn-370, Asn-375, and Asn-399 are each glycosylated (N-linked (GlcNAc...) asparagine). Residues 430-460 are disordered; it reads SDYEIDKKKKKKKKNNKKKKKNKRKNIKPGP. A compositionally biased stretch (basic residues) spans 437–456; sequence KKKKKKKNNKKKKKNKRKNI. An N-linked (GlcNAc...) asparagine glycan is attached at Asn-481.

The protein belongs to the endopolyphosphatase PPN1 family. Requires a divalent metal cation as cofactor. Post-translationally, processing by proteases in the vacuole may be required for activation.

The protein resides in the vacuole membrane. The catalysed reaction is [phosphate](n+1) + n H2O = (n+1) phosphate + n H(+). In terms of biological role, catalyzes the hydrolysis of inorganic polyphosphate (polyP) chains of many hundreds of phosphate residues into shorter lengths. The polypeptide is Endopolyphosphatase (ppn1) (Schizosaccharomyces pombe (strain 972 / ATCC 24843) (Fission yeast)).